Reading from the N-terminus, the 123-residue chain is Ribosome-binding factor A (123 aa).

This sequence belongs to the RbfA family. Monomer. Binds 30S ribosomal subunits, but not 50S ribosomal subunits or 70S ribosomes.

It is found in the cytoplasm. In terms of biological role, one of several proteins that assist in the late maturation steps of the functional core of the 30S ribosomal subunit. Associates with free 30S ribosomal subunits (but not with 30S subunits that are part of 70S ribosomes or polysomes). Required for efficient processing of 16S rRNA. May interact with the 5'-terminal helix region of 16S rRNA. The chain is Ribosome-binding factor A from Delftia acidovorans (strain DSM 14801 / SPH-1).